Consider the following 458-residue polypeptide: tRNA modification GTPase MnmE (458 aa).

(6S)-5-formyl-5,6,7,8-tetrahydrofolate-binding residues include arginine 26, glutamate 88, and arginine 127. Residues 224–378 form the TrmE-type G domain; sequence GLSTAIIGRP…IEDRINQLFF (155 aa). Asparagine 234 is a K(+) binding site. GTP contacts are provided by residues 234-239, 253-259, and 278-281; these read NVGKSS, TDIAGTT, and DTAG. Mg(2+) is bound at residue serine 238. K(+)-binding residues include threonine 253, isoleucine 255, and threonine 258. Threonine 259 serves as a coordination point for Mg(2+). Lysine 458 provides a ligand contact to (6S)-5-formyl-5,6,7,8-tetrahydrofolate.

The protein belongs to the TRAFAC class TrmE-Era-EngA-EngB-Septin-like GTPase superfamily. TrmE GTPase family. As to quaternary structure, homodimer. Heterotetramer of two MnmE and two MnmG subunits. It depends on K(+) as a cofactor.

Its subcellular location is the cytoplasm. Exhibits a very high intrinsic GTPase hydrolysis rate. Involved in the addition of a carboxymethylaminomethyl (cmnm) group at the wobble position (U34) of certain tRNAs, forming tRNA-cmnm(5)s(2)U34. The sequence is that of tRNA modification GTPase MnmE from Streptococcus pyogenes serotype M1.